The primary structure comprises 609 residues: Putative pectinesterase/pectinesterase inhibitor 45 (609 aa).

The chain crosses the membrane as a helical span at residues 25–45; that stretch reads IILGVVSVLVVAAAIIGGAFA. N51, N62, N100, N114, N183, N229, N296, N306, N346, and N362 each carry an N-linked (GlcNAc...) asparagine glycan. Residues 54 to 87 form a disordered region; it reads QEQGKTTNNKSKDSPTKSESPSPKPPSSAAQTVK. A pectinesterase inhibitor 45 region spans residues 89-241; sequence GQVDKIIQTL…QVLTSNSLAM (153 aa). Positions 296-593 are pectinesterase 45; sequence NATVAKDGSG…FTVGPFLQGE (298 aa). Residues T371 and Q401 each coordinate substrate. The active-site Proton donor; for pectinesterase activity is the D424. C438 and C458 are joined by a disulfide. Residue D445 is the Nucleophile; for pectinesterase activity of the active site. A glycan (N-linked (GlcNAc...) asparagine) is linked at N491. Substrate is bound by residues R513 and W515.

In the N-terminal section; belongs to the PMEI family. The protein in the C-terminal section; belongs to the pectinesterase family. As to expression, expressed in flower buds and pollen.

The protein localises to the membrane. The catalysed reaction is [(1-&gt;4)-alpha-D-galacturonosyl methyl ester](n) + n H2O = [(1-&gt;4)-alpha-D-galacturonosyl](n) + n methanol + n H(+). Its pathway is glycan metabolism; pectin degradation; 2-dehydro-3-deoxy-D-gluconate from pectin: step 1/5. Its function is as follows. Acts in the modification of cell walls via demethylesterification of cell wall pectin. The sequence is that of Putative pectinesterase/pectinesterase inhibitor 45 (PME45) from Arabidopsis thaliana (Mouse-ear cress).